A 190-amino-acid chain; its full sequence is DNA-invertase hin (190 aa).

A Resolvase/invertase-type recombinase catalytic domain is found at alanine 2 to glycine 135. The active-site O-(5'-phospho-DNA)-serine intermediate is serine 10. The segment at residues arginine 162–proline 181 is a DNA-binding region (H-T-H motif).

This sequence belongs to the site-specific recombinase resolvase family.

A DNA fragment of approximately 900 base pairs, adjacent to the fljB (H2) gene, which specifies the synthesis of phase-2 flagellin, can exist in either orientation with respect to fljB. The orientation of the inversion region controls expression of fljB. The hin gene occupies about two-thirds of the inversion region; it is required for the inversion of the fljB controlling region. In Salmonella typhimurium (strain LT2 / SGSC1412 / ATCC 700720), this protein is DNA-invertase hin (hin).